Here is a 502-residue protein sequence, read N- to C-terminus: Probable mRNA-splicing protein ubp10 (502 aa).

The segment at 56–153 (SQNLYLDTIN…YVMRPTFTKL (98 aa)) adopts a UBP-type; degenerate zinc-finger fold. Zn(2+)-binding residues include C89, C92, H108, and H114. A USP domain is found at 178–501 (VGMNNIKNND…ESFIQLWERS (324 aa)).

Belongs to the peptidase C19 family.

The protein localises to the nucleus. May play a role in mRNA splicing. It is unsure if the protein really exhibits hydrolase activity. Could be a competitor of ubiquitin C-terminal hydrolases (UCHs). This chain is Probable mRNA-splicing protein ubp10 (ubp10), found in Schizosaccharomyces pombe (strain 972 / ATCC 24843) (Fission yeast).